The chain runs to 421 residues: UDP-N-acetylglucosamine 1-carboxyvinyltransferase (421 aa).

22 to 23 (KN) provides a ligand contact to phosphoenolpyruvate. UDP-N-acetyl-alpha-D-glucosamine is bound at residue R93. C117 functions as the Proton donor in the catalytic mechanism. A 2-(S-cysteinyl)pyruvic acid O-phosphothioketal modification is found at C117. UDP-N-acetyl-alpha-D-glucosamine contacts are provided by residues 122 to 126 (RPVDL), D308, and I330.

Belongs to the EPSP synthase family. MurA subfamily.

The protein resides in the cytoplasm. It catalyses the reaction phosphoenolpyruvate + UDP-N-acetyl-alpha-D-glucosamine = UDP-N-acetyl-3-O-(1-carboxyvinyl)-alpha-D-glucosamine + phosphate. The protein operates within cell wall biogenesis; peptidoglycan biosynthesis. Functionally, cell wall formation. Adds enolpyruvyl to UDP-N-acetylglucosamine. The chain is UDP-N-acetylglucosamine 1-carboxyvinyltransferase from Pseudomonas putida (strain ATCC 700007 / DSM 6899 / JCM 31910 / BCRC 17059 / LMG 24140 / F1).